Here is a 108-residue protein sequence, read N- to C-terminus: Protein ORFa in retron Ec67 (108 aa).

This is Protein ORFa in retron Ec67 from Escherichia coli.